We begin with the raw amino-acid sequence, 124 residues long: Large ribosomal subunit protein bL20c (124 aa).

Belongs to the bacterial ribosomal protein bL20 family.

Its subcellular location is the plastid. The protein localises to the chloroplast. In terms of biological role, binds directly to 23S ribosomal RNA and is necessary for the in vitro assembly process of the 50S ribosomal subunit. It is not involved in the protein synthesizing functions of that subunit. The chain is Large ribosomal subunit protein bL20c from Stigeoclonium helveticum (Green alga).